The primary structure comprises 671 residues: Solute carrier family 5 member 4 (671 aa).

Over 1 to 38 (MPAMGTALPRAMASTASVSTSTGSSELSSLSDNINNPA) the chain is Cytoplasmic. Residues 39–59 (DISVIVIYFVVVMAVGVWAMV) form a helical membrane-spanning segment. The Extracellular segment spans residues 60–65 (KTNRST). Residues 66–86 (VGGFFLAGRSMTWWPMGASLF) traverse the membrane as a helical segment. Residues 87-89 (ASN) lie on the Cytoplasmic side of the membrane. Residues 90-110 (IGSGHFVGLAGTGAATGIAVT) traverse the membrane as a helical segment. Over 111–116 (AFESHS) the chain is Extracellular. A helical membrane pass occupies residues 117–137 (FALLLVLGWFFVPIYIKAGVM). Residues 138–159 (TMPEYLRKRFGGKRLQIYLSVL) are Cytoplasmic-facing. The chain crosses the membrane as a helical span at residues 160 to 180 (SLFICVILTISADIFSGAIFI). A topological domain (extracellular) is located at residue Lys-181. The helical transmembrane segment at 182-202 (LALGLDLYLAIFILLAITAVF) threads the bilayer. At 203–218 (TITGGLASVIYTDTLQ) the chain is on the cytoplasmic side. Residues 219–239 (AIIMLVGSFILMIYAFVEVGG) form a helical membrane-spanning segment. Topologically, residues 240-288 (YESFTEKYMNAIPSVVEGDNLTISPKCYTPQPDSFHIFRDAVTGDIPWP) are extracellular. Residues 289-309 (GTAFGMPITALWYWCINQVIV) form a helical membrane-spanning segment. Topologically, residues 310-324 (QRCLCGKNMSHVKAA) are cytoplasmic. A helical transmembrane segment spans residues 325–345 (CIVCGYLKLLPIFFMVMPGMI). Over 346-378 (SRILYTDMVACVVPSECVKQCGVDVGCTNYAYP) the chain is Extracellular. The chain crosses the membrane as a helical span at residues 379-399 (MLVLKLMPMGLRGLMLSVMLA). Topologically, residues 400 to 434 (SLMSSLTSIFNSASTLFTMDLYTKIRKKASERELL) are cytoplasmic. The helical transmembrane segment at 435 to 455 (IAGRLFVSVLIVTSILWVPIV) threads the bilayer. Topologically, residues 456-467 (EVSQGGQLIHYT) are extracellular. The helical transmembrane segment at 468–488 (EAISSYLGPPIAAVFLVAIFC) threads the bilayer. The Cytoplasmic portion of the chain corresponds to 489–494 (KRVNEQ). Residues 495–515 (GAFWGLMVGLVLGLIRMIAEF) form a helical membrane-spanning segment. The Extracellular segment spans residues 516-537 (SYGTGSCLAPSSCPKVICGVHY). Residues 538-558 (LYYAIILFFVSILVILGVSYL) traverse the membrane as a helical segment. At 559-650 (TKPIPDVHLY…DTSEKPFWRT (92 aa)) the chain is on the cytoplasmic side. Over residues 583-593 (DLDAEDREENE) the composition is skewed to acidic residues. Residues 583–604 (DLDAEDREENEADARTEEDQTE) form a disordered region. Positions 594–604 (ADARTEEDQTE) are enriched in basic and acidic residues. The helical transmembrane segment at 651 to 671 (VVNVNVIVLLAVAAFFYGYFA) threads the bilayer.

It belongs to the sodium:solute symporter (SSF) (TC 2.A.21) family.

It is found in the cell membrane. Generates D-glucose-induced depolarization in a pH-dependent and Na(+)-independent manner, with activity in acidic conditions (pH 5) but not neutral conditions. This chain is Solute carrier family 5 member 4, found in Rattus norvegicus (Rat).